The primary structure comprises 255 residues: Hydroxyacylglutathione hydrolase (255 aa).

Zn(2+) is bound by residues His56, His58, Asp60, His61, His114, Asp133, and His171.

Belongs to the metallo-beta-lactamase superfamily. Glyoxalase II family. As to quaternary structure, monomer. Requires Zn(2+) as cofactor.

It catalyses the reaction an S-(2-hydroxyacyl)glutathione + H2O = a 2-hydroxy carboxylate + glutathione + H(+). It functions in the pathway secondary metabolite metabolism; methylglyoxal degradation; (R)-lactate from methylglyoxal: step 2/2. In terms of biological role, thiolesterase that catalyzes the hydrolysis of S-D-lactoyl-glutathione to form glutathione and D-lactic acid. The chain is Hydroxyacylglutathione hydrolase from Roseobacter denitrificans (strain ATCC 33942 / OCh 114) (Erythrobacter sp. (strain OCh 114)).